A 221-amino-acid polypeptide reads, in one-letter code: MNKGQYFWNELWCEGRISFHKEEVNPDLIAYVSSLNTPAKGRILVPLCGKSVDMLWLVRQGYHVVGIELVEKAILQFVQEHQITVRENTIGQAKQYFTDNLNLWVTDIFALNSALIEPVDAIYDRAALVALPKKLRPAYVDICLKWLKPGGSILLKTLQYNQEKVQGPPYSVSSEEIALSYQQCAKIELLKSQKRIQEPNDHLFNLGISEVNDYVWCIRKG.

Residues tryptophan 12, leucine 47, glutamate 68, and arginine 125 each contribute to the S-adenosyl-L-methionine site.

It belongs to the class I-like SAM-binding methyltransferase superfamily. TPMT family.

It localises to the cytoplasm. It carries out the reaction S-adenosyl-L-methionine + a thiopurine = S-adenosyl-L-homocysteine + a thiopurine S-methylether.. In Legionella pneumophila (strain Corby), this protein is Thiopurine S-methyltransferase.